The following is a 302-amino-acid chain: Ornithine carbamoyltransferase (302 aa).

Carbamoyl phosphate-binding positions include 52 to 55 (STRT), glutamine 79, arginine 103, and 130 to 133 (HPCQ). L-ornithine contacts are provided by residues asparagine 161, aspartate 221, and 225–226 (SM). Residues 261–262 (CL) and arginine 289 contribute to the carbamoyl phosphate site.

Belongs to the aspartate/ornithine carbamoyltransferase superfamily. OTCase family.

Its subcellular location is the cytoplasm. The enzyme catalyses carbamoyl phosphate + L-ornithine = L-citrulline + phosphate + H(+). It functions in the pathway amino-acid biosynthesis; L-arginine biosynthesis; L-arginine from L-ornithine and carbamoyl phosphate: step 1/3. Functionally, reversibly catalyzes the transfer of the carbamoyl group from carbamoyl phosphate (CP) to the N(epsilon) atom of ornithine (ORN) to produce L-citrulline. The polypeptide is Ornithine carbamoyltransferase (Methanosarcina mazei (strain ATCC BAA-159 / DSM 3647 / Goe1 / Go1 / JCM 11833 / OCM 88) (Methanosarcina frisia)).